Here is a 153-residue protein sequence, read N- to C-terminus: ATP synthase subunit b' (153 aa).

Residues threonine 20 to phenylalanine 40 form a helical membrane-spanning segment.

This sequence belongs to the ATPase B chain family. F-type ATPases have 2 components, F(1) - the catalytic core - and F(0) - the membrane proton channel. F(1) has five subunits: alpha(3), beta(3), gamma(1), delta(1), epsilon(1). F(0) has four main subunits: a(1), b(1), b'(1) and c(10-14). The alpha and beta chains form an alternating ring which encloses part of the gamma chain. F(1) is attached to F(0) by a central stalk formed by the gamma and epsilon chains, while a peripheral stalk is formed by the delta, b and b' chains.

Its subcellular location is the cellular thylakoid membrane. In terms of biological role, f(1)F(0) ATP synthase produces ATP from ADP in the presence of a proton or sodium gradient. F-type ATPases consist of two structural domains, F(1) containing the extramembraneous catalytic core and F(0) containing the membrane proton channel, linked together by a central stalk and a peripheral stalk. During catalysis, ATP synthesis in the catalytic domain of F(1) is coupled via a rotary mechanism of the central stalk subunits to proton translocation. Its function is as follows. Component of the F(0) channel, it forms part of the peripheral stalk, linking F(1) to F(0). The b'-subunit is a diverged and duplicated form of b found in plants and photosynthetic bacteria. This chain is ATP synthase subunit b', found in Prochlorococcus marinus (strain NATL2A).